The primary structure comprises 305 residues: Peroxisome assembly protein 26 (305 aa).

Over 1–246 (MKSDASTSAA…RRLWGSVVSH (246 aa)) the chain is Cytoplasmic. The helical; Signal-anchor for type II membrane protein transmembrane segment at 247–267 (LLSQPFRKGLLAALILCLLIL) threads the bilayer. The Peroxisomal matrix portion of the chain corresponds to 268-305 (RFDPAAPSSLPFLYQLTQLFRRIQKATLSRLYPLALRD).

Belongs to the peroxin-26 family. Interacts (via its cytoplasmic domain) with PEX6; interaction is direct and is ATP-dependent. Interacts with PEX1; interaction is indirect and is mediated via interaction with PEX6.

The protein localises to the peroxisome membrane. In terms of biological role, peroxisomal docking factor that anchors PEX1 and PEX6 to peroxisome membranes. PEX26 is therefore required for the formation of the PEX1-PEX6 AAA ATPase complex, a complex that mediates the extraction of the PEX5 receptor from peroxisomal membrane. This is Peroxisome assembly protein 26 from Mus musculus (Mouse).